We begin with the raw amino-acid sequence, 57 residues long: UPF0391 membrane protein azo1765 (57 aa).

The next 2 helical transmembrane spans lie at 1–21 (MIKW…FGFT) and 33–53 (VLFF…VGLG).

This sequence belongs to the UPF0391 family.

Its subcellular location is the cell membrane. The protein is UPF0391 membrane protein azo1765 of Azoarcus sp. (strain BH72).